Reading from the N-terminus, the 850-residue chain is Protein translocase subunit SecA (850 aa).

ATP is bound by residues Gln87, 105–109, and Asp494; that span reads GEGKT. Residues Cys834, Cys836, Cys845, and Cys846 each contribute to the Zn(2+) site.

Belongs to the SecA family. As to quaternary structure, monomer and homodimer. Part of the essential Sec protein translocation apparatus which comprises SecA, SecYEG and auxiliary proteins SecDF-YajC and YidC. Zn(2+) serves as cofactor.

The protein localises to the cell inner membrane. It is found in the cytoplasm. The enzyme catalyses ATP + H2O + cellular proteinSide 1 = ADP + phosphate + cellular proteinSide 2.. Part of the Sec protein translocase complex. Interacts with the SecYEG preprotein conducting channel. Has a central role in coupling the hydrolysis of ATP to the transfer of proteins into and across the cell membrane, serving as an ATP-driven molecular motor driving the stepwise translocation of polypeptide chains across the membrane. The polypeptide is Protein translocase subunit SecA (Desulfotalea psychrophila (strain LSv54 / DSM 12343)).